Here is a 776-residue protein sequence, read N- to C-terminus: Endonuclease MutS2 (776 aa).

328-335 (GPNTGGKT) serves as a coordination point for ATP. The Smr domain occupies 701-776 (LDLRGKRYEE…GSGATIVTFK (76 aa)).

This sequence belongs to the DNA mismatch repair MutS family. MutS2 subfamily. As to quaternary structure, homodimer. Binds to stalled ribosomes, contacting rRNA.

Functionally, endonuclease that is involved in the suppression of homologous recombination and thus may have a key role in the control of bacterial genetic diversity. Its function is as follows. Acts as a ribosome collision sensor, splitting the ribosome into its 2 subunits. Detects stalled/collided 70S ribosomes which it binds and splits by an ATP-hydrolysis driven conformational change. Acts upstream of the ribosome quality control system (RQC), a ribosome-associated complex that mediates the extraction of incompletely synthesized nascent chains from stalled ribosomes and their subsequent degradation. Probably generates substrates for RQC. In Streptococcus mutans serotype c (strain ATCC 700610 / UA159), this protein is Endonuclease MutS2.